Consider the following 209-residue polypeptide: Uridine kinase (209 aa).

ATP is bound at residue 12-19 (GGSGSGKT).

The protein belongs to the uridine kinase family.

The protein localises to the cytoplasm. It catalyses the reaction uridine + ATP = UMP + ADP + H(+). The enzyme catalyses cytidine + ATP = CMP + ADP + H(+). It functions in the pathway pyrimidine metabolism; CTP biosynthesis via salvage pathway; CTP from cytidine: step 1/3. The protein operates within pyrimidine metabolism; UMP biosynthesis via salvage pathway; UMP from uridine: step 1/1. This chain is Uridine kinase, found in Listeria innocua serovar 6a (strain ATCC BAA-680 / CLIP 11262).